A 195-amino-acid polypeptide reads, in one-letter code: Myelin basic protein (195 aa).

Alanine 2 carries the post-translational modification N-acetylalanine. 2 positions are modified to phosphoserine: serine 8 and serine 13. The residue at position 15 (tyrosine 15) is a Phosphotyrosine. Threonine 18 carries the phosphothreonine modification. Serine 20 is subject to Phosphoserine. Threonine 21 carries the post-translational modification Phosphothreonine. Arginine 26 and arginine 32 each carry citrulline. Threonine 36 is subject to Phosphothreonine. Residue serine 41 is modified to Phosphoserine. 2 positions are modified to omega-N-methylarginine: arginine 44 and arginine 50. The interval 45–79 (FFSGDRGAPKRGSGKVPWLKQSRSPLPSHARSRPG) is disordered. Serine 57 is subject to Phosphoserine. The residue at position 92 (threonine 92) is a Phosphothreonine. Tyrosine 94 is subject to Phosphotyrosine. The residue at position 101 (serine 101) is a Phosphoserine. Phosphothreonine occurs at positions 104, 119, and 122. A disordered region spans residues 117 to 139 (IVTPRTPPPSQGKGRGLSLSRFS). Position 127 is a deamidated glutamine (glutamine 127). Residue arginine 131 is modified to Omega-N-methylarginine; alternate. Position 131 is a symmetric dimethylarginine; alternate (arginine 131). Serine 139 carries the post-translational modification Phosphoserine. N6-acetyllysine is present on lysine 146. Citrulline is present on arginine 154. Glutamine 172 bears the Deamidated glutamine mark. Citrulline is present on arginine 184. Serine 186 carries the post-translational modification Phosphoserine. Position 190 is a phosphoserine; by UHMK1 (serine 190). The residue at position 195 (arginine 195) is a Citrulline.

It belongs to the myelin basic protein family. Homodimer. Post-translationally, as in other animals, several charge isomers may be produced as a result of optional post-translational modifications, such as phosphorylation of serine or threonine residues, deamidation of glutamine or asparagine residues, citrullination and methylation of arginine residues. Arg-131 was found to be 44% monomethylated and 11% symmetrically dimethylated. In terms of processing, phosphorylated by TAOK2, VRK2, MAPK11, MAPK12, MAPK14 and MINK1. Post-translationally, proteolytically cleaved in B cell lysosomes by cathepsin CTSG which degrades the major immunogenic MBP epitope and prevents the activation of MBP-specific autoreactive T cells. As to expression, found in both the central and the peripheral nervous system.

The protein localises to the myelin membrane. Functionally, is, with PLP, the most abundant protein component of the myelin membrane in the CNS. Has a role in both the formation and stabilization of this compact multilayer arrangement of bilayers. Each splice variant and charge isomer may have a specialized function in the assembly of an optimized, biochemically functional myelin membrane. This chain is Myelin basic protein (Mbp), found in Rattus norvegicus (Rat).